Consider the following 1164-residue polypeptide: Integrin alpha-5 (1164 aa).

The segment covering 1 to 14 has biased composition (basic and acidic residues); sequence MREEGGGSREKEGE. Positions 1–119 are disordered; the sequence is MREEGGGSRE…MGSRTPGSPL (119 aa). The span at 81-90 shows a compositional bias: low complexity; sequence LLPALSHSPL. One copy of the FG-GAP 1 repeat lies at 156 to 221; that stretch reads NLDAEAPAVL…CPWGTSPAQC (66 aa). Residue N197 is glycosylated (N-linked (GlcNAc...) asparagine). The cysteines at positions 212 and 221 are disulfide-linked. Phosphoserine is present on S240. FG-GAP repeat units lie at residues 241–301, 306–358, 372–424, 425–490, 491–550, and 554–617; these read SEGE…QILE, RSDF…AESY, QTRQ…GSDI, RSLY…GMEP, TPTL…GLAS, and QVLL…IFPA. C269 and C289 are disulfide-bonded. N-linked (GlcNAc...) asparagine glycosylation is present at N295. The cysteines at positions 305 and 318 are disulfide-linked. Q375 and D382 together coordinate a protein. Residues E393, S395, D397, and D401 each contribute to the Ca(2+) site. N-linked (GlcNAc...) asparagine glycans are attached at residues N410, N420, and N429. D447, N449, D451, L453, D455, D514, D516, D518, Y520, D522, D578, D580, N582, Y584, and D586 together coordinate Ca(2+). A disulfide bridge links C626 with C635. 4 N-linked (GlcNAc...) asparagine glycosylation sites follow: N637, N643, N706, and N722. C641 and C697 are disulfide-bonded. Residues C758 and C764 are joined by a disulfide bond. Residues N788, N825, N837, N886, and N982 are each glycosylated (N-linked (GlcNAc...) asparagine). The cysteines at positions 831 and 844 are disulfide-linked. 3 disulfide bridges follow: C962–C1072, C983–C1036, and C1026–C1031. Residues 983–1022 are disordered; that stretch reads CTTSHPPNPEGLELDPEGSQHHRLQRRDVPGRSPASSGPQ. A helical transmembrane segment spans residues 1114-1134; it reads LWIIILAILIGLLLLGLLIYI. Residues 1135 to 1164 are Cytoplasmic-facing; sequence LYKLGFFKRSLPYGTAMEKAQLKPPATSDA. Positions 1136-1143 are interaction with HPS5; it reads YKLGFFKR. Positions 1139-1143 match the GFFKR motif motif; it reads GFFKR.

This sequence belongs to the integrin alpha chain family. In terms of assembly, heterodimer of an alpha and a beta subunit. The alpha subunit is composed of a heavy and a light chain linked by a disulfide bond. Alpha-5 associates with beta-1. Interacts with NISCH. Interacts with HPS5. Interacts with RAB21 and COMP. Interacts with CIB1. ITGA5:ITGB1 interacts with CCN3. ITGA5:ITGB1 interacts with FBN1. ITGA5:ITGB1 interacts with IL1B. ITGA5:ITGB1 interacts with ACE2. ITGA5:ITGB1 interacts with SELP. Interacts with ANGPT2. ITGA5:ITGB1 interacts with IGFBP2. ITGA5:ITGB1 interacts with IGFBP1. Post-translationally, proteolytic cleavage by PCSK5 mediates activation of the precursor.

Its subcellular location is the cell membrane. It is found in the cell junction. It localises to the focal adhesion. Functionally, integrin alpha-5/beta-1 (ITGA5:ITGB1) is a receptor for fibronectin and fibrinogen. It recognizes the sequence R-G-D in its ligands. ITGA5:ITGB1 binds to PLA2G2A via a site (site 2) which is distinct from the classical ligand-binding site (site 1) and this induces integrin conformational changes and enhanced ligand binding to site 1. ITGA5:ITGB1 acts as a receptor for fibrillin-1 (FBN1) and mediates R-G-D-dependent cell adhesion to FBN1. ITGA5:ITGB1 acts as a receptor for fibronectin (FN1) and mediates R-G-D-dependent cell adhesion to FN1. ITGA5:ITGB1 is a receptor for IL1B and binding is essential for IL1B signaling. ITGA5:ITGB3 is a receptor for soluble CD40LG and is required for CD40/CD40LG signaling. This chain is Integrin alpha-5 (ITGA5), found in Bos taurus (Bovine).